The primary structure comprises 231 residues: Staphylococcal superantigen-like 7 (231 aa).

Residues 1–30 (MKLKTLAKATLALGLLTTGVITSEGQAVQA) form the signal peptide.

It belongs to the staphylococcal/streptococcal toxin family. As to quaternary structure, interacts with host IgA and complement C5; these interactions inhibits complement activation.

It localises to the secreted. Its function is as follows. Plays a role in the inhibition of host complement-mediated lysis and serum bactericidal activity by interacting with complement component C5. Affects all three pathways of complement activation and inhibits the cleavage of C5 by preventing its binding to C5 convertases. In turn, prevents C5a-mediated neutrophil migration. The sequence is that of Staphylococcal superantigen-like 7 from Staphylococcus aureus (strain NCTC 8325 / PS 47).